A 302-amino-acid polypeptide reads, in one-letter code: Aspartate carbamoyltransferase catalytic subunit (302 aa).

Residues R53 and T54 each contribute to the carbamoyl phosphate site. K82 lines the L-aspartate pocket. The carbamoyl phosphate site is built by R103, H131, and Q134. Positions 164 and 223 each coordinate L-aspartate. Carbamoyl phosphate is bound by residues L260 and P261.

Belongs to the aspartate/ornithine carbamoyltransferase superfamily. ATCase family. Heterooligomer of catalytic and regulatory chains.

It carries out the reaction carbamoyl phosphate + L-aspartate = N-carbamoyl-L-aspartate + phosphate + H(+). Its pathway is pyrimidine metabolism; UMP biosynthesis via de novo pathway; (S)-dihydroorotate from bicarbonate: step 2/3. Catalyzes the condensation of carbamoyl phosphate and aspartate to form carbamoyl aspartate and inorganic phosphate, the committed step in the de novo pyrimidine nucleotide biosynthesis pathway. This chain is Aspartate carbamoyltransferase catalytic subunit, found in Methanococcus vannielii (strain ATCC 35089 / DSM 1224 / JCM 13029 / OCM 148 / SB).